Here is a 310-residue protein sequence, read N- to C-terminus: tRNA dimethylallyltransferase 2 (310 aa).

15–22 (GPTASGKT) contributes to the ATP binding site. Position 17–22 (17–22 (TASGKT)) interacts with substrate. Positions 40–43 (DSMQ) are interaction with substrate tRNA.

Belongs to the IPP transferase family. In terms of assembly, monomer. It depends on Mg(2+) as a cofactor.

It carries out the reaction adenosine(37) in tRNA + dimethylallyl diphosphate = N(6)-dimethylallyladenosine(37) in tRNA + diphosphate. Functionally, catalyzes the transfer of a dimethylallyl group onto the adenine at position 37 in tRNAs that read codons beginning with uridine, leading to the formation of N6-(dimethylallyl)adenosine (i(6)A). This is tRNA dimethylallyltransferase 2 from Geotalea uraniireducens (strain Rf4) (Geobacter uraniireducens).